The primary structure comprises 812 residues: Endogenous retrovirus group K member 18 Pol protein (812 aa).

The Reverse transcriptase domain occupies Leu57–Ile245. The LPQG motif lies at Leu161–Gly164. Residues Tyr195 to Asp198 carry the YXDD motif. Residues Leu460 to Ile590 form the RNase H type-1 domain. Positions 469, 497, 517, and 582 each coordinate Mg(2+). The segment at Ser587 to Gln628 adopts an Integrase-type zinc-finger fold. 4 residues coordinate Zn(2+): His596, His600, Cys624, and Cys627. The region spanning Ala637–Lys803 is the Integrase catalytic domain.

Belongs to the beta type-B retroviral polymerase family. HERV class-II K(HML-2) pol subfamily.

It catalyses the reaction DNA(n) + a 2'-deoxyribonucleoside 5'-triphosphate = DNA(n+1) + diphosphate. It carries out the reaction Endonucleolytic cleavage to 5'-phosphomonoester.. In terms of biological role, early post-infection, the reverse transcriptase converts the viral RNA genome into double-stranded viral DNA. The RNase H domain of the reverse transcriptase performs two functions. It degrades the RNA template and specifically removes the RNA primer from the RNA/DNA hybrid. Following nuclear import, the integrase catalyzes the insertion of the linear, double-stranded viral DNA into the host cell chromosome. Endogenous Pol proteins may have kept, lost or modified their original function during evolution. In Homo sapiens (Human), this protein is Endogenous retrovirus group K member 18 Pol protein (ERVK-18).